A 399-amino-acid polypeptide reads, in one-letter code: Salivary protein Tsal1 (399 aa).

Positions 1–22 are cleaved as a signal peptide; it reads MALKLVYGVFTLALLGISSVNA. Asn268 carries an N-linked (GlcNAc...) asparagine glycan.

Belongs to the DNA/RNA non-specific endonuclease family. The cofactor is a divalent metal cation. In terms of tissue distribution, saliva (at protein level).

It is found in the secreted. In terms of biological role, binds double-stranded DNA (dsDNA) with high affinity. Binds double-stranded RNA. Binds single-stranded DNA with lower affinity and with a preference for purine-rich sequences. Shows residual nuclease activity for dsDNA. May facilitate blood meal intake by lowering the local viscosity created by the release of host DNA. In Glossina morsitans morsitans (Savannah tsetse fly), this protein is Salivary protein Tsal1.